The sequence spans 571 residues: Asparagine--tRNA ligase, cytoplasmic 3 (571 aa).

At Gly2 the chain carries N-acetylglycine. The segment at residues 50-128 (VRIGGWVKTG…QSIELSVETV (79 aa)) is a DNA-binding region (OB). Residues 233–289 (DVEAARLIVKERGEAVAQLKVAKASKEEITASVAQLSVAKASLAHVEERLRLKPGLP) form the WHEP-TRS domain.

This sequence belongs to the class-II aminoacyl-tRNA synthetase family.

The protein resides in the cytoplasm. It is found in the cytosol. It carries out the reaction tRNA(Asn) + L-asparagine + ATP = L-asparaginyl-tRNA(Asn) + AMP + diphosphate + H(+). The sequence is that of Asparagine--tRNA ligase, cytoplasmic 3 from Arabidopsis thaliana (Mouse-ear cress).